Here is a 364-residue protein sequence, read N- to C-terminus: Alanine racemase (364 aa).

Lys-35 acts as the Proton acceptor; specific for D-alanine in catalysis. Position 35 is an N6-(pyridoxal phosphate)lysine (Lys-35). Arg-130 contacts substrate. Tyr-256 (proton acceptor; specific for L-alanine) is an active-site residue. Met-304 is a substrate binding site.

This sequence belongs to the alanine racemase family. Requires pyridoxal 5'-phosphate as cofactor.

The enzyme catalyses L-alanine = D-alanine. Its pathway is amino-acid biosynthesis; D-alanine biosynthesis; D-alanine from L-alanine: step 1/1. Functionally, catalyzes the interconversion of L-alanine and D-alanine. May also act on other amino acids. The chain is Alanine racemase (alr) from Polaromonas sp. (strain JS666 / ATCC BAA-500).